A 346-amino-acid chain; its full sequence is Biotin synthase (346 aa).

Positions 38–256 (RQVQVSTLLS…IAVARIMMPT (219 aa)) constitute a Radical SAM core domain. 3 residues coordinate [4Fe-4S] cluster: Cys-53, Cys-57, and Cys-60. Residues Cys-97, Cys-128, Cys-188, and Arg-260 each coordinate [2Fe-2S] cluster.

The protein belongs to the radical SAM superfamily. Biotin synthase family. In terms of assembly, homodimer. [4Fe-4S] cluster is required as a cofactor. [2Fe-2S] cluster serves as cofactor.

It carries out the reaction (4R,5S)-dethiobiotin + (sulfur carrier)-SH + 2 reduced [2Fe-2S]-[ferredoxin] + 2 S-adenosyl-L-methionine = (sulfur carrier)-H + biotin + 2 5'-deoxyadenosine + 2 L-methionine + 2 oxidized [2Fe-2S]-[ferredoxin]. It participates in cofactor biosynthesis; biotin biosynthesis; biotin from 7,8-diaminononanoate: step 2/2. Catalyzes the conversion of dethiobiotin (DTB) to biotin by the insertion of a sulfur atom into dethiobiotin via a radical-based mechanism. This Escherichia coli O157:H7 protein is Biotin synthase.